An 874-amino-acid polypeptide reads, in one-letter code: Alanine--tRNA ligase (874 aa).

Zn(2+) contacts are provided by H562, H566, C664, and H668.

It belongs to the class-II aminoacyl-tRNA synthetase family. Requires Zn(2+) as cofactor.

The protein localises to the cytoplasm. It carries out the reaction tRNA(Ala) + L-alanine + ATP = L-alanyl-tRNA(Ala) + AMP + diphosphate. Its function is as follows. Catalyzes the attachment of alanine to tRNA(Ala) in a two-step reaction: alanine is first activated by ATP to form Ala-AMP and then transferred to the acceptor end of tRNA(Ala). Also edits incorrectly charged Ser-tRNA(Ala) and Gly-tRNA(Ala) via its editing domain. This chain is Alanine--tRNA ligase, found in Shewanella baltica (strain OS155 / ATCC BAA-1091).